We begin with the raw amino-acid sequence, 76 residues long: Small ribosomal subunit protein bS18 (76 aa).

This sequence belongs to the bacterial ribosomal protein bS18 family. In terms of assembly, part of the 30S ribosomal subunit. Forms a tight heterodimer with protein bS6.

In terms of biological role, binds as a heterodimer with protein bS6 to the central domain of the 16S rRNA, where it helps stabilize the platform of the 30S subunit. The chain is Small ribosomal subunit protein bS18 from Marinomonas sp. (strain MWYL1).